Reading from the N-terminus, the 217-residue chain is Aprataxin-like protein (217 aa).

In terms of domain architecture, HIT spans 6–139 (ALKNYVTSPE…HIHVISKDFH (134 aa)). 3 interaction with DNA regions span residues 34–38 (DSFPK), 121–132 (HSVPSMANLHIH), and 144–148 (KNKKH). Catalysis depends on His130, which acts as the Nucleophile. 4 residues coordinate Zn(2+): Cys188, Cys191, His205, and Glu209.

Its subcellular location is the nucleus. It localises to the cytoplasm. It catalyses the reaction a 5'-end adenosine-5'-diphospho-5'-2'-deoxyribonucleoside-DNA + H2O = a 5'-end 5'-phospho-2'-deoxyribonucleoside-DNA + AMP + 2 H(+). It carries out the reaction a 5'-end adenosine-5'-diphospho-5'-ribonucleoside-2'-deoxyribonucleotide-DNA + H2O = a 5'-end 5'-phospho-ribonucleoside-2'-deoxyribonucleotide-DNA + AMP + 2 H(+). The enzyme catalyses a 3'-end 2'-deoxyribonucleotide-3'-diphospho-5'-guanosine-DNA + H2O = a 3'-end 2'-deoxyribonucleotide 3'-phosphate-DNA + GMP + 2 H(+). Its function is as follows. DNA-binding protein involved in single-strand DNA break repair, double-strand DNA break repair and base excision repair. Resolves abortive DNA ligation intermediates formed either at base excision sites, or when DNA ligases attempt to repair non-ligatable breaks induced by reactive oxygen species. Catalyzes the release of adenylate groups covalently linked to 5'-phosphate termini, resulting in the production of 5'-phosphate termini that can be efficiently rejoined. Likewise, catalyzes the release of 3'-linked guanosine (DNAppG) and inosine (DNAppI) from DNA, but has higher specific activity with 5'-linked adenosine (AppDNA). This is Aprataxin-like protein (HNT3) from Saccharomyces cerevisiae (strain ATCC 204508 / S288c) (Baker's yeast).